Reading from the N-terminus, the 156-residue chain is DNA mismatch endonuclease Vsr (156 aa).

Mg(2+) is bound by residues Asp51 and Thr63.

The protein belongs to the Vsr family. It depends on Mg(2+) as a cofactor. Zn(2+) serves as cofactor.

In terms of biological role, deamination of 5-methylcytosine in DNA results in T/G mismatches. If unrepaired, these mismatches can lead to C-to-T transition mutations. The very short patch (VSP) repair process in E.coli counteracts the mutagenic process by repairing the mismatches in favor of the G-containing strand. This enzyme is an endonuclease that nicks double-stranded DNA within the sequence CT(AT)GN or NT(AT)GG next to the thymidine residue that is mismatched to 2'-deoxyguanosine. The incision is mismatch-dependent and strand-specific. The polypeptide is DNA mismatch endonuclease Vsr (Escherichia coli (strain K12)).